The following is a 93-amino-acid chain: YcgL domain-containing protein KPK_1976 (93 aa).

Positions 1–85 (MFCVIYRSTK…PSENLLKKHL (85 aa)) constitute a YcgL domain.

This chain is YcgL domain-containing protein KPK_1976, found in Klebsiella pneumoniae (strain 342).